The sequence spans 47 residues: Snake venom metalloproteinase jararafibrase-4 (47 aa).

Residues 6–47 enclose the Peptidase M12B domain; the sequence is RYIELFLVVDHGMFMKYNGNSDKIYYYIHQMVNIMKXAYXYL. Position 9 (E9) interacts with Ca(2+).

The protein belongs to the venom metalloproteinase (M12B) family. As to quaternary structure, monomer. The cofactor is Zn(2+). In terms of tissue distribution, expressed by the venom gland.

The protein localises to the secreted. With respect to regulation, inhibited by 1,10-phenanthroline and EDTA. In terms of biological role, the metalloproteinase is a probable venom zinc protease that induces local hemorrhage in the skin of rats. Degrades type-IV collagen, gelatin, laminin and fibronectin. Has fibrinolytic activities. Has high hemagglutinating activity on red blood cells. Cleaves insulin B chain at 29-His-|-Leu-30, and 38-Ala-|-Leu-39 bonds. The sequence is that of Snake venom metalloproteinase jararafibrase-4 from Bothrops jararaca (Jararaca).